Here is a 109-residue protein sequence, read N- to C-terminus: Somatostatin-2 (109 aa).

The first 16 residues, 1–16 (MQFLASLVSFLLVVWS), serve as a signal peptide directing secretion. Positions 17–80 (VKATALPVED…EPLENKLEER (64 aa)) are excised as a propeptide. C98 and C109 are disulfide-bonded.

The protein belongs to the somatostatin family.

It localises to the secreted. Somatostatin inhibits the release of somatotropin. The chain is Somatostatin-2 (sst2) from Protopterus annectens (African lungfish).